Reading from the N-terminus, the 252-residue chain is MKTVTVKNLIIGEGMPKIIVSLMGRDINSVKAEALAYREATFDILEWRVDHFMDIASTQSVLTAARVIRDAMPDIPLLFTFRSAKEGGEQTITTQHYLTLNRAAIDSGLVDMIDLELFTGDADVKATVDYAHAHNVYVVMSNHDFHQTPSAEEMVLRLRKMQALGADIPKIAVMPQSKHDVLTLLTATLEMQQHYADRPVITMSMAKEGVISRLAGEVFGSAATFGAVKQASAPGQIAVNDLRSVLMILHNA.

Residues Ser21, 46–48, and Arg82 contribute to the 3-dehydroquinate site; that span reads EWR. The active-site Proton donor/acceptor is the His143. Catalysis depends on Lys170, which acts as the Schiff-base intermediate with substrate. Arg213, Ser232, and Gln236 together coordinate 3-dehydroquinate.

It belongs to the type-I 3-dehydroquinase family. Dimer of dimers.

It carries out the reaction 3-dehydroquinate = 3-dehydroshikimate + H2O. Its pathway is metabolic intermediate biosynthesis; chorismate biosynthesis; chorismate from D-erythrose 4-phosphate and phosphoenolpyruvate: step 3/7. With respect to regulation, inhibited by (2R)-2-methyl-3-dehydroquinic acid. In terms of biological role, involved in the third step of the chorismate pathway, which leads to the biosynthesis of aromatic amino acids. Catalyzes the cis-dehydration of 3-dehydroquinate (DHQ) and introduces the first double bond of the aromatic ring to yield 3-dehydroshikimate. The reaction involves the formation of an imine intermediate between the keto group of 3-dehydroquinate and the epsilon-amino group of Lys-170 at the active site. This is 3-dehydroquinate dehydratase from Salmonella typhi.